The primary structure comprises 204 residues: Phosphoribosyl-dephospho-CoA transferase (204 aa).

Residues D129 and D131 contribute to the active site.

This sequence belongs to the MdcG family.

The enzyme catalyses apo-[malonate decarboxylase ACP] + 2'-(5''-triphospho-alpha-D-ribosyl)-3'-dephospho-CoA = holo-[malonate decarboxylase ACP] + diphosphate. In terms of biological role, transfers 2'-(5-triphosphoribosyl)-3'-dephosphocoenzyme-A to the apo-[acyl-carrier-protein] of the malonate decarboxylase to yield holo-[acyl-carrier-protein]. The sequence is that of Phosphoribosyl-dephospho-CoA transferase from Pseudomonas putida (strain W619).